The primary structure comprises 324 residues: Olfactory receptor 7G2 (324 aa).

Topologically, residues 1 to 25 (MEARNQTAISKFLLLGLIEDPELQP) are extracellular. An N-linked (GlcNAc...) asparagine glycan is attached at Asn-5. Residues 26-46 (VLFSLFLSMYLVTILGNLLIL) traverse the membrane as a helical segment. Residues 47 to 54 (LAVISDSH) are Cytoplasmic-facing. A helical membrane pass occupies residues 55–75 (LHTPMYFFLSNLSFLDICLST). The Extracellular segment spans residues 76–99 (TTIPKMLVNIQAQNRSITYSGCLT). The N-linked (GlcNAc...) asparagine glycan is linked to Asn-89. Cysteines 97 and 189 form a disulfide. The helical transmembrane segment at 100–120 (QICFVLFFAGLENCLLAAMAY) threads the bilayer. The Cytoplasmic segment spans residues 121–139 (DRYVAICHPLRYTVIMNPR). Residues 140-160 (LCGLLILLSLLTSVVNALLLS) form a helical membrane-spanning segment. The Extracellular segment spans residues 161 to 197 (LMVLRLSFCTDLEIPLFFCELAQVIQLTCSDTLINNI). Residues 198–217 (LIYFAACIFGGVPLSGIILS) traverse the membrane as a helical segment. Residues 218-237 (YTQITSCVLRMPSASGKHKA) lie on the Cytoplasmic side of the membrane. A helical transmembrane segment spans residues 238–258 (VSTCGSHLSIVLLFYGAGLGV). Topologically, residues 259–271 (YISSVVTDSPRKT) are extracellular. The helical transmembrane segment at 272–292 (AVASVMYSVFPQMVNPFIYSL) threads the bilayer. At 293 to 324 (RNKDMKGTLRKFIGRIPSLLWCAICFGFRFLE) the chain is on the cytoplasmic side.

This sequence belongs to the G-protein coupled receptor 1 family.

It localises to the cell membrane. Functionally, odorant receptor. This chain is Olfactory receptor 7G2 (OR7G2), found in Homo sapiens (Human).